The sequence spans 295 residues: Indole-3-glycerol phosphate synthase (295 aa).

Belongs to the TrpC family.

It catalyses the reaction 1-(2-carboxyphenylamino)-1-deoxy-D-ribulose 5-phosphate + H(+) = (1S,2R)-1-C-(indol-3-yl)glycerol 3-phosphate + CO2 + H2O. It participates in amino-acid biosynthesis; L-tryptophan biosynthesis; L-tryptophan from chorismate: step 4/5. This chain is Indole-3-glycerol phosphate synthase, found in Synechococcus sp. (strain ATCC 27144 / PCC 6301 / SAUG 1402/1) (Anacystis nidulans).